A 123-amino-acid polypeptide reads, in one-letter code: MNAVTETVDLQAPPPVPLVFTDSAAAKVKDLLAEEGNPELKLRVFVQGGGCSGFQYGFTFDEVVNDDDTVLDKAGVQLLVDPMSFQYLVGAEIDYKEDLEGAQFVIRNPNASTTCGCGSSFSV.

Iron-sulfur cluster contacts are provided by Cys-51, Cys-115, and Cys-117.

Belongs to the HesB/IscA family. Homodimer. Requires iron-sulfur cluster as cofactor.

Required for insertion of 4Fe-4S clusters. The sequence is that of Putative iron-sulfur cluster insertion protein ErpA from Bordetella bronchiseptica (strain ATCC BAA-588 / NCTC 13252 / RB50) (Alcaligenes bronchisepticus).